Consider the following 226-residue polypeptide: ATP synthase subunit a (226 aa).

Helical transmembrane passes span 17 to 37 (FNYL…AKLA), 79 to 99 (LVAT…IPGF), 105 to 125 (SLNL…FEGI), 168 to 188 (FGNI…APWV), and 200 to 222 (MALL…AVVV).

It belongs to the ATPase A chain family. F-type ATPases have 2 components, CF(1) - the catalytic core - and CF(0) - the membrane proton channel. CF(1) has five subunits: alpha(3), beta(3), gamma(1), delta(1), epsilon(1). CF(0) has three main subunits: a(1), b(2) and c(9-12). The alpha and beta chains form an alternating ring which encloses part of the gamma chain. CF(1) is attached to CF(0) by a central stalk formed by the gamma and epsilon chains, while a peripheral stalk is formed by the delta and b chains.

It localises to the cell inner membrane. Its function is as follows. Key component of the proton channel; it plays a direct role in the translocation of protons across the membrane. This is ATP synthase subunit a from Campylobacter fetus subsp. fetus (strain 82-40).